The sequence spans 261 residues: Proteasome subunit beta type-2 (261 aa).

The propeptide at 1 to 29 is removed in mature form; the sequence is MAGLSFDNYQRNNFLAENSHTQPKATSTG. The active-site Nucleophile is the Thr-30.

It belongs to the peptidase T1B family. The 26S proteasome consists of a 20S proteasome core and two 19S regulatory subunits. The 20S proteasome core is composed of 28 subunits that are arranged in four stacked rings, resulting in a barrel-shaped structure. The two end rings are each formed by seven alpha subunits, and the two central rings are each formed by seven beta subunits. The catalytic chamber with the active sites is on the inside of the barrel.

Its subcellular location is the cytoplasm. It localises to the nucleus. It carries out the reaction Cleavage of peptide bonds with very broad specificity.. The proteasome degrades poly-ubiquitinated proteins in the cytoplasm and in the nucleus. It is essential for the regulated turnover of proteins and for the removal of misfolded proteins. The proteasome is a multicatalytic proteinase complex that is characterized by its ability to cleave peptides with Arg, Phe, Tyr, Leu, and Glu adjacent to the leaving group at neutral or slightly basic pH. It has an ATP-dependent proteolytic activity. This chain is Proteasome subunit beta type-2 (PUP1), found in Saccharomyces cerevisiae (strain ATCC 204508 / S288c) (Baker's yeast).